The primary structure comprises 506 residues: Glycerol kinase (506 aa).

Threonine 12 lines the ADP pocket. ATP contacts are provided by threonine 12, threonine 13, and serine 14. Residue threonine 12 participates in sn-glycerol 3-phosphate binding. Arginine 16 lines the ADP pocket. Residues arginine 82, glutamate 83, tyrosine 134, and aspartate 246 each contribute to the sn-glycerol 3-phosphate site. The glycerol site is built by arginine 82, glutamate 83, tyrosine 134, aspartate 246, and glutamine 247. ADP contacts are provided by threonine 268 and glycine 312. Residues threonine 268, glycine 312, glutamine 316, and glycine 413 each contribute to the ATP site. The ADP site is built by glycine 413 and asparagine 417.

The protein belongs to the FGGY kinase family.

It carries out the reaction glycerol + ATP = sn-glycerol 3-phosphate + ADP + H(+). Its pathway is polyol metabolism; glycerol degradation via glycerol kinase pathway; sn-glycerol 3-phosphate from glycerol: step 1/1. Its activity is regulated as follows. Inhibited by fructose 1,6-bisphosphate (FBP). In terms of biological role, key enzyme in the regulation of glycerol uptake and metabolism. Catalyzes the phosphorylation of glycerol to yield sn-glycerol 3-phosphate. The chain is Glycerol kinase from Leifsonia xyli subsp. xyli (strain CTCB07).